Consider the following 267-residue polypeptide: Transcription factor LBX1 (267 aa).

Positions 1-21 (MTSKDEAKSSASSVEERRRNA) are enriched in basic and acidic residues. Residues 1-36 (MTSKDEAKSSASSVEERRRNALDLLPPPANSNKPLT) are disordered. The segment at residues 127–186 (RRKSRTAFTNHQIYELEKRFLYQKYLSPADRDQIAQQLGLTNAQVITWFQNRRAKLKRDL) is a DNA-binding region (homeobox). The segment at 211–267 (SELEESGSERGNSRSRSPQLGLTSNHMPLSPSXPLTDQHASKECSEDEEDVEIDVDD) is disordered. Residues 228-237 (PQLGLTSNHM) show a composition bias toward polar residues. Residues 255–267 (SEDEEDVEIDVDD) show a composition bias toward acidic residues.

Expressed in all myoblasts that will populate body wall muscles as well as in a group of cells the migrate into the head.

It is found in the nucleus. Its function is as follows. Transcription factor that controls hypaxial muscle development by down-regulating myod1 and cdkn1b/p27, thereby allowing myoblasts to proliferate before the onset of terminal differentiation. This Xenopus laevis (African clawed frog) protein is Transcription factor LBX1.